Reading from the N-terminus, the 759-residue chain is Catalase-peroxidase (759 aa).

Positions 1-24 (MTQDKCPFKEQSSQPNFAGGGTSN) are disordered. The segment at residues 96–242 (WHSAGTYRVF…LAAAHMGLIY (147 aa)) is a cross-link (tryptophyl-tyrosyl-methioninium (Trp-Tyr) (with M-268)). The active-site Proton acceptor is the His-97. Residues 242 to 268 (YVNPEGPDGNPDPVAAAHDIRDTFGRM) constitute a cross-link (tryptophyl-tyrosyl-methioninium (Tyr-Met) (with W-96)). His-283 provides a ligand contact to heme b.

Belongs to the peroxidase family. Peroxidase/catalase subfamily. In terms of assembly, homodimer or homotetramer. Heme b serves as cofactor. Formation of the three residue Trp-Tyr-Met cross-link is important for the catalase, but not the peroxidase activity of the enzyme.

Its subcellular location is the cytoplasm. It carries out the reaction H2O2 + AH2 = A + 2 H2O. The catalysed reaction is 2 H2O2 = O2 + 2 H2O. Bifunctional enzyme with both catalase and broad-spectrum peroxidase activity. The polypeptide is Catalase-peroxidase (Aspergillus fumigatus (strain CBS 144.89 / FGSC A1163 / CEA10) (Neosartorya fumigata)).